The sequence spans 244 residues: DNA polymerase sliding clamp (244 aa).

It belongs to the PCNA family. In terms of assembly, homotrimer. The subunits circularize to form a toroid; DNA passes through its center. Replication factor C (RFC) is required to load the toroid on the DNA.

Sliding clamp subunit that acts as a moving platform for DNA processing. Responsible for tethering the catalytic subunit of DNA polymerase to DNA during high-speed replication. In conjunction with replication factor C (RFC) stimulates DNA synthesis by PolB, relieving inhibition by replication protein A (RPA). This Methanothermobacter thermautotrophicus (strain ATCC 29096 / DSM 1053 / JCM 10044 / NBRC 100330 / Delta H) (Methanobacterium thermoautotrophicum) protein is DNA polymerase sliding clamp.